The chain runs to 112 residues: Putative pterin-4-alpha-carbinolamine dehydratase (112 aa).

Belongs to the pterin-4-alpha-carbinolamine dehydratase family.

The enzyme catalyses (4aS,6R)-4a-hydroxy-L-erythro-5,6,7,8-tetrahydrobiopterin = (6R)-L-erythro-6,7-dihydrobiopterin + H2O. This chain is Putative pterin-4-alpha-carbinolamine dehydratase, found in Vibrio campbellii (strain ATCC BAA-1116).